Reading from the N-terminus, the 322-residue chain is uncharacterized protein (322 aa).

Residues 1–17 show a composition bias toward low complexity; that stretch reads MASMAAAIAASRSAVMS. Positions 1 to 22 are disordered; the sequence is MASMAAAIAASRSAVMSGNRPL. A2 carries the post-translational modification N-acetylalanine. The residue at position 37 (S37) is a Phosphoserine. Positions 81–104 are disordered; the sequence is AAAADAGDVRDPARFPGLRGPTGQ. S130 is modified (phosphoserine). 2 stretches are compositionally biased toward polar residues: residues 142 to 153 and 161 to 177; these read QEPSAATVTSDA and QGTQ…SSSL. The interval 142-301 is disordered; that stretch reads QEPSAATVTS…DDDALFSEPA (160 aa). S176 is modified (phosphoserine). Positions 183-203 are enriched in basic and acidic residues; the sequence is ARKEEEAPFWKINAERSREGP. A compositionally biased stretch (polar residues) spans 245 to 255; sequence QEQQTLPSVSA.

It localises to the cytoplasm. This is an uncharacterized protein from Mus musculus (Mouse).